The chain runs to 185 residues: Ribosome-recycling factor (185 aa).

Belongs to the RRF family.

Its subcellular location is the cytoplasm. Its function is as follows. Responsible for the release of ribosomes from messenger RNA at the termination of protein biosynthesis. May increase the efficiency of translation by recycling ribosomes from one round of translation to another. This Frankia alni (strain DSM 45986 / CECT 9034 / ACN14a) protein is Ribosome-recycling factor.